Here is a 245-residue protein sequence, read N- to C-terminus: Uridylate kinase (245 aa).

ATP is bound at residue 20–23 (KLSG). Residue Gly-60 coordinates UMP. Positions 61 and 65 each coordinate ATP. Residues Asp-80 and 141 to 148 (AGLPYFST) each bind UMP. Tyr-175 and Asp-178 together coordinate ATP.

Belongs to the UMP kinase family. Homohexamer.

The protein localises to the cytoplasm. It carries out the reaction UMP + ATP = UDP + ADP. It functions in the pathway pyrimidine metabolism; CTP biosynthesis via de novo pathway; UDP from UMP (UMPK route): step 1/1. Its activity is regulated as follows. Inhibited by UTP. Functionally, catalyzes the reversible phosphorylation of UMP to UDP. The polypeptide is Uridylate kinase (Arthrobacter sp. (strain FB24)).